We begin with the raw amino-acid sequence, 417 residues long: Tol-Pal system protein TolB (417 aa).

An N-terminal signal peptide occupies residues 1–16 (MRYLWLFLIHTIGLFA).

It belongs to the TolB family. In terms of assembly, the Tol-Pal system is composed of five core proteins: the inner membrane proteins TolA, TolQ and TolR, the periplasmic protein TolB and the outer membrane protein Pal. They form a network linking the inner and outer membranes and the peptidoglycan layer.

It localises to the periplasm. Part of the Tol-Pal system, which plays a role in outer membrane invagination during cell division and is important for maintaining outer membrane integrity. The chain is Tol-Pal system protein TolB from Helicobacter pylori (strain ATCC 700392 / 26695) (Campylobacter pylori).